The sequence spans 59 residues: Cecropin-A (59 aa).

The first 23 residues, 1 to 23 (MNFNKLFVIVLLAALAFFGQAEA), serve as a signal peptide directing secretion. Residue leucine 57 is modified to Leucine amide.

Belongs to the cecropin family.

Its subcellular location is the secreted. Its function is as follows. Cecropins have lytic and antibacterial activity against several Gram-positive and Gram-negative bacteria. In Culex pipiens pipiens (Northern house mosquito), this protein is Cecropin-A (CECA).